A 111-amino-acid polypeptide reads, in one-letter code: Photosystem II reaction center Psb28 protein (111 aa).

It belongs to the Psb28 family. As to quaternary structure, part of the photosystem II complex.

Its subcellular location is the cellular thylakoid membrane. This is Photosystem II reaction center Psb28 protein from Gloeothece citriformis (strain PCC 7424) (Cyanothece sp. (strain PCC 7424)).